A 249-amino-acid polypeptide reads, in one-letter code: DNA repair protein RecO (249 aa).

The protein belongs to the RecO family.

Involved in DNA repair and RecF pathway recombination. In Polaromonas sp. (strain JS666 / ATCC BAA-500), this protein is DNA repair protein RecO.